The following is a 356-amino-acid chain: MIELRPLLQLNLEDGIPVLKDLLTADSFSFTDVELLRYIPAIAKNTPAQTRDLAASVADALDVDQTTALAAIEALVELGLLVPSASISSQKAGIQLWVDKGWVDALILHFASRNLNYNDDPIEFGGLEDIKSYPEPMESKRRKRGTATRLVKPSRELAAAVILDGLMNRRSFKPFTRKQLSITEVSEILWFGNLYARERAVIAENRDFESPRDIAFDSAFSALSTFVVTYGQIDWQDGSLPPGVYRYNVVNHELEAIRAGDFKLDMAKLAIGQSRASSGLFTFVICGDLKSYTSRYRHERSYRNLLINTSQLAQFYLTLATINDFNTFLTPAIHDEKMHLFLEAEDDLPLYLVTAG.

The chain is Trifolitoxin operon protein TfxC (tfxC) from Rhizobium leguminosarum bv. trifolii.